Here is a 513-residue protein sequence, read N- to C-terminus: MASDTPGFYVDKLNKYSQIHKVKIIYKEISVTGPPHDRRFTFQVIIEEREFPEGEGRSKQEAKNNAAKLAVEILDNENKVDSHTDASEQGLIEGNYIGLVNSFAQKENLPVNFELCDPDSQLPHRFICKCKIGQTTYGTGFGANKKEAKQLAAKNAYQKLSEKSPSKTGFVTSLSSDFSSSSSITSNSASQSASGRDFEDIFMNGLREKRKSGVKVPSDDVLRNKYTLDDRFSKDFEDIEEIGSGGFGQVFKAKHRIDGKTYAIKRITYNTKKAKREVQALAELNHANIVQYRVCWEGEDYDYDPENSTNGDTSRYKTRCLFIQMEFCDKGTLQQWLEKRNRSQEDKALVLELFEQIVTGVDYIHSKGLIHRDLKPGNIFLVDEKHIKIGDFGLATALENDGNPRTKYTGTPQYMSPEQKSSLVEYGKEVDIFALGLILAELLHICKTDSEKIEFFQLLRNGIFSDDIFDNKEKSLLQKLLSSKPRERPNTSEILKTLAEWKNISEKKKRNTC.

An N-acetylalanine modification is found at alanine 2. Positions 8–76 (FYVDKLNKYS…AKLAVEILDN (69 aa)) constitute a DRBM 1 domain. A Glycyl lysine isopeptide (Lys-Gly) (interchain with G-Cter in ISG15) cross-link involves residue lysine 68. Phosphoserine is present on serine 82. Threonine 84 is subject to Phosphothreonine. The 68-residue stretch at 95–162 (NYIGLVNSFA…AKNAYQKLSE (68 aa)) folds into the DRBM 2 domain. Residue tyrosine 96 is modified to Phosphotyrosine; by autocatalysis. A Glycyl lysine isopeptide (Lys-Gly) (interchain with G-Cter in ISG15) cross-link involves residue lysine 154. Tyrosine 157 carries the post-translational modification Phosphotyrosine; by autocatalysis. Threonine 227 carries the phosphothreonine modification. The segment at 235 to 513 (DFEDIEEIGS…ISEKKKRNTC (279 aa)) is interaction with TRAF5. One can recognise a Protein kinase domain in the interval 236 to 502 (FEDIEEIGSG…EILKTLAEWK (267 aa)). 242–250 (IGSGGFGQV) contributes to the ATP binding site. A Phosphotyrosine; by autocatalysis modification is found at tyrosine 262. Lysine 265 lines the ATP pocket. Catalysis depends on aspartate 373, which acts as the Proton acceptor. Phosphothreonine; by autocatalysis is present on residues threonine 406 and threonine 411. Serine 416 is subject to Phosphoserine.

This sequence belongs to the protein kinase superfamily. Ser/Thr protein kinase family. GCN2 subfamily. As to quaternary structure, homodimer. Interacts with DNAJC3. Interacts with STRBP. Forms a complex with FANCA, FANCC, FANCG and HSP70. Interacts with ADAR/ADAR1. The inactive form interacts with NCK1 and GSN. Interacts (via the kinase catalytic domain) with STAT3 (via SH2 domain), TRAF2 (C-terminus), TRAF5 (C-terminus) and TRAF6 (C-terminus). Interacts with MAP2K6, IKBKB/IKKB, IRS1, NPM1, TARBP2, NLRP1, NLRP3, NLRC4 and AIM2. Interacts (via DRBM 1 domain) with DUS2L (via DRBM domain). Interacts with DHX9 (via N-terminus) and this interaction is dependent upon activation of the kinase. In terms of processing, autophosphorylated on several Ser, Thr and Tyr residues. Autophosphorylation of Thr-411 is dependent on Thr-406 and is stimulated by dsRNA binding and dimerization. Autophosphorylation apparently leads to the activation of the kinase. Tyrosine autophosphorylation is essential for efficient dsRNA-binding, dimerization, and kinase activation.

The protein resides in the cytoplasm. Its subcellular location is the nucleus. The protein localises to the perinuclear region. It carries out the reaction L-seryl-[protein] + ATP = O-phospho-L-seryl-[protein] + ADP + H(+). The enzyme catalyses L-threonyl-[protein] + ATP = O-phospho-L-threonyl-[protein] + ADP + H(+). The catalysed reaction is L-tyrosyl-[protein] + ATP = O-phospho-L-tyrosyl-[protein] + ADP + H(+). Initially produced in an inactive form and is activated by binding to viral dsRNA, which causes dimerization and autophosphorylation in the activation loop and stimulation of function. ISGylation can activate it in the absence of viral infection. Can also be activated by heparin, pro-inflammatory stimuli, growth factors, cytokines, oxidative stress and the cellular protein PRKRA. Activity is markedly stimulated by manganese ions. Activation is blocked by the cellular proteins TARBP2, DUS2L, NPM1, NCK1 and ADAR. In terms of biological role, IFN-induced dsRNA-dependent serine/threonine-protein kinase that phosphorylates the alpha subunit of eukaryotic translation initiation factor 2 (EIF2S1/eIF-2-alpha) and plays a key role in the innate immune response to viral infection. Inhibits viral replication via the integrated stress response (ISR): EIF2S1/eIF-2-alpha phosphorylation in response to viral infection converts EIF2S1/eIF-2-alpha in a global protein synthesis inhibitor, resulting to a shutdown of cellular and viral protein synthesis, while concomitantly initiating the preferential translation of ISR-specific mRNAs, such as the transcriptional activator ATF4. Exerts its antiviral activity on a wide range of DNA and RNA viruses. Also involved in the regulation of signal transduction, apoptosis, cell proliferation and differentiation: phosphorylates other substrates including p53/TP53, PPP2R5A, DHX9, ILF3 and IRS1. In addition to serine/threonine-protein kinase activity, also has tyrosine-protein kinase activity and phosphorylates CDK1 at 'Tyr-4' upon DNA damage, facilitating its ubiquitination and proteasomal degradation. Either as an adapter protein and/or via its kinase activity, can regulate various signaling pathways (p38 MAP kinase, NF-kappa-B and insulin signaling pathways) and transcription factors (JUN, STAT1, STAT3, IRF1, ATF3) involved in the expression of genes encoding pro-inflammatory cytokines and IFNs. Activates the NF-kappa-B pathway via interaction with IKBKB and TRAF family of proteins and activates the p38 MAP kinase pathway via interaction with MAP2K6. Can act as both a positive and negative regulator of the insulin signaling pathway (ISP). Negatively regulates ISP by inducing the inhibitory phosphorylation of insulin receptor substrate 1 (IRS1) at 'Ser-312' and positively regulates ISP via phosphorylation of PPP2R5A which activates FOXO1, which in turn up-regulates the expression of insulin receptor substrate 2 (IRS2). Can regulate NLRP3 inflammasome assembly and the activation of NLRP3, NLRP1, AIM2 and NLRC4 inflammasomes. Plays a role in the regulation of the cytoskeleton by binding to gelsolin (GSN), sequestering the protein in an inactive conformation away from actin. In Rattus norvegicus (Rat), this protein is Interferon-induced, double-stranded RNA-activated protein kinase (Eif2ak2).